A 534-amino-acid chain; its full sequence is Glucans biosynthesis protein D (534 aa).

Positions M1–A30 form a signal peptide, tat-type signal.

Belongs to the OpgD/OpgG family. Predicted to be exported by the Tat system. The position of the signal peptide cleavage has not been experimentally proven.

The protein resides in the periplasm. It functions in the pathway glycan metabolism; osmoregulated periplasmic glucan (OPG) biosynthesis. Functionally, probably involved in the control of the structural glucose backbone of osmoregulated periplasmic glucans (OPGs). The sequence is that of Glucans biosynthesis protein D from Xanthomonas oryzae pv. oryzae (strain PXO99A).